We begin with the raw amino-acid sequence, 157 residues long: S-ribosylhomocysteine lyase (157 aa).

3 residues coordinate Fe cation: His-54, His-58, and Cys-126.

Belongs to the LuxS family. In terms of assembly, homodimer. The cofactor is Fe cation.

It catalyses the reaction S-(5-deoxy-D-ribos-5-yl)-L-homocysteine = (S)-4,5-dihydroxypentane-2,3-dione + L-homocysteine. Functionally, involved in the synthesis of autoinducer 2 (AI-2) which is secreted by bacteria and is used to communicate both the cell density and the metabolic potential of the environment. The regulation of gene expression in response to changes in cell density is called quorum sensing. Catalyzes the transformation of S-ribosylhomocysteine (RHC) to homocysteine (HC) and 4,5-dihydroxy-2,3-pentadione (DPD). The polypeptide is S-ribosylhomocysteine lyase (Bacillus anthracis (strain A0248)).